The following is a 197-amino-acid chain: ATP-dependent Clp protease proteolytic subunit (197 aa).

Ser-98 functions as the Nucleophile in the catalytic mechanism. The active site involves His-123.

This sequence belongs to the peptidase S14 family. Fourteen ClpP subunits assemble into 2 heptameric rings which stack back to back to give a disk-like structure with a central cavity, resembling the structure of eukaryotic proteasomes.

It localises to the cytoplasm. The enzyme catalyses Hydrolysis of proteins to small peptides in the presence of ATP and magnesium. alpha-casein is the usual test substrate. In the absence of ATP, only oligopeptides shorter than five residues are hydrolyzed (such as succinyl-Leu-Tyr-|-NHMec, and Leu-Tyr-Leu-|-Tyr-Trp, in which cleavage of the -Tyr-|-Leu- and -Tyr-|-Trp bonds also occurs).. Functionally, cleaves peptides in various proteins in a process that requires ATP hydrolysis. Has a chymotrypsin-like activity. Plays a major role in the degradation of misfolded proteins. The chain is ATP-dependent Clp protease proteolytic subunit from Haemophilus ducreyi (strain 35000HP / ATCC 700724).